A 159-amino-acid polypeptide reads, in one-letter code: Ribosomal RNA large subunit methyltransferase H (159 aa).

S-adenosyl-L-methionine is bound by residues L76, G108, and 127 to 132 (FGRLTL).

Belongs to the RNA methyltransferase RlmH family. Homodimer.

It is found in the cytoplasm. The catalysed reaction is pseudouridine(1915) in 23S rRNA + S-adenosyl-L-methionine = N(3)-methylpseudouridine(1915) in 23S rRNA + S-adenosyl-L-homocysteine + H(+). Functionally, specifically methylates the pseudouridine at position 1915 (m3Psi1915) in 23S rRNA. The chain is Ribosomal RNA large subunit methyltransferase H from Listeria monocytogenes serovar 1/2a (strain ATCC BAA-679 / EGD-e).